Consider the following 617-residue polypeptide: Probable potassium transport system protein Kup 3 (617 aa).

11 consecutive transmembrane segments (helical) span residues 42-62 (VASL…ALLI), 95-115 (LVVG…TPAI), 129-149 (PSLA…LFMM), 160-180 (IFGP…IHGI), 206-226 (VSFA…AMYA), 240-260 (WFAI…ALLI), 282-302 (LVAF…SGVF), 330-350 (IYVP…VLSF), 360-380 (YGIA…LVAI), 386-406 (PWLV…FFSA), and 411-431 (LFEG…MMLT).

This sequence belongs to the HAK/KUP transporter (TC 2.A.72) family.

It is found in the cell inner membrane. It carries out the reaction K(+)(in) + H(+)(in) = K(+)(out) + H(+)(out). Functionally, transport of potassium into the cell. Likely operates as a K(+):H(+) symporter. This Bradyrhizobium diazoefficiens (strain JCM 10833 / BCRC 13528 / IAM 13628 / NBRC 14792 / USDA 110) protein is Probable potassium transport system protein Kup 3.